The chain runs to 594 residues: Glutamate decarboxylase 1 (594 aa).

Positions methionine 1–serine 13 are enriched in low complexity. The interval methionine 1 to asparagine 23 is disordered. A Phosphoserine modification is found at serine 78. Position 190-192 (glutamine 190–serine 192) interacts with 4-aminobutanoate. Lysine 405 carries the post-translational modification N6-(pyridoxal phosphate)lysine. Arginine 567 contacts 4-aminobutanoate.

Belongs to the group II decarboxylase family. In terms of assembly, homodimer. The cofactor is pyridoxal 5'-phosphate.

It catalyses the reaction L-glutamate + H(+) = 4-aminobutanoate + CO2. Catalyzes the synthesis of the inhibitory neurotransmitter gamma-aminobutyric acid (GABA) with pyridoxal 5'-phosphate as cofactor. The polypeptide is Glutamate decarboxylase 1 (GAD1) (Pongo abelii (Sumatran orangutan)).